Here is a 125-residue protein sequence, read N- to C-terminus: Succinate dehydrogenase assembly factor 3, mitochondrial (125 aa).

Residues 1-42 (MRTTNHLYRTVHRQGKPLLPPLHLYRRILRAHRTFPPAQRAL) constitute a mitochondrion transit peptide.

It belongs to the complex I LYR family. SDHAF3 subfamily. In terms of assembly, interacts with the iron-sulfur protein subunit within the SDH catalytic dimer.

Its subcellular location is the mitochondrion matrix. In terms of biological role, plays an essential role in the assembly of succinate dehydrogenase (SDH), an enzyme complex (also referred to as respiratory complex II) that is a component of both the tricarboxylic acid (TCA) cycle and the mitochondrial electron transport chain, and which couples the oxidation of succinate to fumarate with the reduction of ubiquinone (coenzyme Q) to ubiquinol. Promotes maturation of the iron-sulfur protein subunit of the SDH catalytic dimer, protecting it from the deleterious effects of oxidants. May act together with SDHAF1. In Eremothecium gossypii (strain ATCC 10895 / CBS 109.51 / FGSC 9923 / NRRL Y-1056) (Yeast), this protein is Succinate dehydrogenase assembly factor 3, mitochondrial.